The sequence spans 185 residues: MAPKGSCKQQSEEDLLLQDFSRNLSAKSSALFFGNAFIVSAIPIWLYWRIWHMDLIQSAVLYSVMTLVSTYLVAFAYKNVKFVLKHKVAQKREDAVSKEVTRKLSEADNRKMSRKEKDERILWKKNEVADYEATTFSIFYNNTLFLVVVIVASFFILKNFNPTVNYILSISASSGLIALLSTGSK.

Methionine 1 is subject to N-acetylmethionine. The Lumenal segment spans residues 1–27 (MAPKGSCKQQSEEDLLLQDFSRNLSAK). Residue serine 11 is modified to Phosphoserine. A helical membrane pass occupies residues 28-48 (SSALFFGNAFIVSAIPIWLYW). The Cytoplasmic portion of the chain corresponds to 49–54 (RIWHMD). The chain crosses the membrane as a helical span at residues 55-76 (LIQSAVLYSVMTLVSTYLVAFA). Residues 77–135 (YKNVKFVLKHKVAQKREDAVSKEVTRKLSEADNRKMSRKEKDERILWKKNEVADYEATT) are Lumenal-facing. Serine 105 carries the post-translational modification Phosphoserine. Residues 136–157 (FSIFYNNTLFLVVVIVASFFIL) traverse the membrane as a helical segment. Residues 158–163 (KNFNPT) are Cytoplasmic-facing. Residues 164–184 (VNYILSISASSGLIALLSTGS) traverse the membrane as a helical segment.

It belongs to the TRAP-gamma family. In terms of assembly, heterotetramer of TRAP-alpha, TRAP-beta, TRAP-delta and TRAP-gamma.

The protein resides in the endoplasmic reticulum membrane. Functionally, TRAP proteins are part of a complex whose function is to bind calcium to the ER membrane and thereby regulate the retention of ER resident proteins. This is Translocon-associated protein subunit gamma (SSR3) from Pongo abelii (Sumatran orangutan).